The primary structure comprises 618 residues: UvrABC system protein C (618 aa).

Positions D13 to I92 constitute a GIY-YIG domain. One can recognise a UVR domain in the interval L204 to I239.

This sequence belongs to the UvrC family. In terms of assembly, interacts with UvrB in an incision complex.

The protein localises to the cytoplasm. In terms of biological role, the UvrABC repair system catalyzes the recognition and processing of DNA lesions. UvrC both incises the 5' and 3' sides of the lesion. The N-terminal half is responsible for the 3' incision and the C-terminal half is responsible for the 5' incision. This is UvrABC system protein C from Clostridium botulinum (strain ATCC 19397 / Type A).